The sequence spans 533 residues: Lymphocyte cytosolic protein 2 (533 aa).

Residues Trp-15–Ile-81 enclose the SAM domain. Tyr-23 is modified (phosphotyrosine). Residues Arg-78–Ser-417 form a disordered region. The segment covering Phe-108–Ala-155 has biased composition (acidic residues). The span at Gln-184 to Gln-213 shows a compositional bias: pro residues. At Ser-207 the chain carries Phosphoserine. Polar residues-rich tracts occupy residues Met-337 to Ser-350 and Ser-365 to Ser-376. A phosphoserine mark is found at Ser-376 and Ser-410. Residues Leu-400 to Pro-411 are compositionally biased toward pro residues. The SH2 domain maps to Trp-422–Ala-530.

As to quaternary structure, interacts with SLA. Interacts with CBLB. Interacts with GRB2. Interacts with SHB. Interacts with PRAM1. Interacts (via SH2 domain) with CD6 (via tyrosine phosphorylated C-terminus). Interacts with FYB1 and the phosphorylated form of FYB2. Interacts with 14-3-3 adapter/YWHAZ; this phosphorylation leads to YWHAZ proteolytic degradation. Interacts with VAV1; this interaction plays a role in TCR-mediated cytokine production. Interacts with AGER; this interaction plays an important role in AGER-mediated pro-inflammatory responses and cytokine release. In terms of processing, phosphorylated after T-cell receptor activation by ZAP70, ITK and TXK, which leads to the up-regulation of Th1 preferred cytokine IL-2. SYK-dependent phosphorylation is required for recruitment of PI3K signaling components. As to expression, highly expressed in spleen, thymus and peripheral blood leukocytes. Highly expressed also in T-cell and monocytic cell lines, expressed at lower level in B-cell lines. Not detected in fibroblast or neuroblastoma cell lines.

Its subcellular location is the cytoplasm. Functionally, adapter protein primarily involved in signaling pathways within T-cells, as well as other immune cells such as platelets, mast cells, and natural killer (NK) cells. Plays a crucial role for transducing signal from the T-cell receptor (TCR) after antigen recognition leading to T-cell activation. Mechanistically, once phosphorylated by the kinase ZAP70, mediates interactions with the guanine-nucleotide exchange factor VAV1, the adapter protein NCK and the kinase ITK. In turn, stimulates the activation of PKC-theta/PRKCQ and NF-kappa-B transcriptional activity in response to CD3 and CD28 costimulation. Also plays an essential role in AGER-induced signaling pathways including p38 MAPK and ERK1/2 activation leading to cytokine release and pro-inflammatory responses. This chain is Lymphocyte cytosolic protein 2 (LCP2), found in Homo sapiens (Human).